The sequence spans 357 residues: NADH-quinone oxidoreductase subunit H (357 aa).

Transmembrane regions (helical) follow at residues 25 to 45 (ILIILIKAITLVIPLMLVVAY), 94 to 114 (IYLFLLAPVLAIAPAIAVWVV), 130 to 150 (LLYVLAIGSIGVYGIILAGWA), 166 to 186 (LLVSYEIVIGFALATVVMIAG), 201 to 221 (IIYWNFIPLFPMMIIFFISAL), 254 to 274 (FFLAEYANMILMAVLAVVMFF), 294 to 314 (VPGIIWLLAKTTFFMFLYLWV), and 329 to 349 (LSWKVFLPITIIWIFVVALMT).

This sequence belongs to the complex I subunit 1 family. As to quaternary structure, NDH-1 is composed of 14 different subunits. Subunits NuoA, H, J, K, L, M, N constitute the membrane sector of the complex.

The protein resides in the cell inner membrane. It carries out the reaction a quinone + NADH + 5 H(+)(in) = a quinol + NAD(+) + 4 H(+)(out). Functionally, NDH-1 shuttles electrons from NADH, via FMN and iron-sulfur (Fe-S) centers, to quinones in the respiratory chain. The immediate electron acceptor for the enzyme in this species is believed to be ubiquinone. Couples the redox reaction to proton translocation (for every two electrons transferred, four hydrogen ions are translocated across the cytoplasmic membrane), and thus conserves the redox energy in a proton gradient. This subunit may bind ubiquinone. In Ruthia magnifica subsp. Calyptogena magnifica, this protein is NADH-quinone oxidoreductase subunit H.